A 236-amino-acid polypeptide reads, in one-letter code: Thiol:disulfide interchange protein DsbC (236 aa).

The first 20 residues, 1–20 (MKKGFMLFTLLAAFSGFAQA), serve as a signal peptide directing secretion. Residues 36 to 231 (SSDIQPAPVA…MKEFLDEHQK (196 aa)) form the Thioredoxin domain. Intrachain disulfides connect C118/C121 and C161/C183.

This sequence belongs to the thioredoxin family. DsbC subfamily. In terms of assembly, homodimer.

Its subcellular location is the periplasm. In terms of biological role, required for disulfide bond formation in some periplasmic proteins. Acts by transferring its disulfide bond to other proteins and is reduced in the process. DsbC is reoxidized by a yet uncharacterized protein. Also acts as a disulfide isomerase. In Escherichia coli O157:H7, this protein is Thiol:disulfide interchange protein DsbC (dsbC).